Consider the following 88-residue polypeptide: Co-chaperonin GroES (88 aa).

The protein belongs to the GroES chaperonin family. Heptamer of 7 subunits arranged in a ring. Interacts with the chaperonin GroEL.

It is found in the cytoplasm. Together with the chaperonin GroEL, plays an essential role in assisting protein folding. The GroEL-GroES system forms a nano-cage that allows encapsulation of the non-native substrate proteins and provides a physical environment optimized to promote and accelerate protein folding. GroES binds to the apical surface of the GroEL ring, thereby capping the opening of the GroEL channel. The chain is Co-chaperonin GroES from Treponema pallidum (strain Nichols).